A 115-amino-acid polypeptide reads, in one-letter code: MAEQVTSAKATAKTVRIPARKARLVIDLIRGKSVAEAFGILKFTPRSGAYLIEKVLKSAVANAENNFDLDVEDLYVSEAFVNEGPTLKRFRPRAKGSASPINKRTSHITVVVSVK.

This sequence belongs to the universal ribosomal protein uL22 family. As to quaternary structure, part of the 50S ribosomal subunit.

This protein binds specifically to 23S rRNA; its binding is stimulated by other ribosomal proteins, e.g. L4, L17, and L20. It is important during the early stages of 50S assembly. It makes multiple contacts with different domains of the 23S rRNA in the assembled 50S subunit and ribosome. Functionally, the globular domain of the protein is located near the polypeptide exit tunnel on the outside of the subunit, while an extended beta-hairpin is found that lines the wall of the exit tunnel in the center of the 70S ribosome. The chain is Large ribosomal subunit protein uL22 from Ligilactobacillus salivarius (strain UCC118) (Lactobacillus salivarius).